Reading from the N-terminus, the 297-residue chain is Superoxide dismutase 1 copper chaperone (297 aa).

Cys11 provides a ligand contact to Cu cation. Positions 222-263 (GSSCCSKKDSSPSEKPSCCSQEKKSCCSSKKPSCCSQEKKGC) are disordered. Low complexity predominate over residues 234-257 (SEKPSCCSQEKKSCCSSKKPSCCS).

It belongs to the CCS1 family.

It is found in the cytoplasm. Its function is as follows. Copper chaperone for superoxide dismutase 1 (sod1). Binds copper ions and delivers them specifically to sod1. Also has a role in cell protection against copper ion toxicity during conditions of copper excess. The C-terminal region is thought to act specifically in this sequestration role. This chain is Superoxide dismutase 1 copper chaperone (ccs1), found in Schizosaccharomyces pombe (strain 972 / ATCC 24843) (Fission yeast).